The following is a 117-amino-acid chain: Ubiquitin-like protein 3 (117 aa).

The 79-residue stretch at 10-88 folds into the Ubiquitin-like domain; sequence INLRLILVSG…PFGKTTVMHL (79 aa). C113 carries the S-palmitoyl cysteine lipid modification. C114 is subject to Cysteine methyl ester. The S-geranylgeranyl cysteine moiety is linked to residue C114. Residues 115–117 constitute a propeptide, removed in mature form; sequence VIL.

It is found in the cell membrane. This chain is Ubiquitin-like protein 3 (UBL3), found in Bos taurus (Bovine).